The sequence spans 117 residues: Large ribosomal subunit protein bL17 (117 aa).

The protein belongs to the bacterial ribosomal protein bL17 family. Part of the 50S ribosomal subunit. Contacts protein L32.

The protein is Large ribosomal subunit protein bL17 of Thermomicrobium roseum (strain ATCC 27502 / DSM 5159 / P-2).